The primary structure comprises 101 residues: Integration host factor subunit beta (101 aa).

The protein belongs to the bacterial histone-like protein family. Heterodimer of an alpha and a beta chain.

Functionally, this protein is one of the two subunits of integration host factor, a specific DNA-binding protein that functions in genetic recombination as well as in transcriptional and translational control. The protein is Integration host factor subunit beta of Maricaulis maris (strain MCS10) (Caulobacter maris).